We begin with the raw amino-acid sequence, 616 residues long: Dihydroxy-acid dehydratase (616 aa).

D81 contacts Mg(2+). C122 lines the [2Fe-2S] cluster pocket. Positions 123 and 124 each coordinate Mg(2+). K124 is subject to N6-carboxylysine. Residue C195 coordinates [2Fe-2S] cluster. E491 contacts Mg(2+). The Proton acceptor role is filled by S517.

Belongs to the IlvD/Edd family. Homodimer. [2Fe-2S] cluster serves as cofactor. Mg(2+) is required as a cofactor.

It catalyses the reaction (2R)-2,3-dihydroxy-3-methylbutanoate = 3-methyl-2-oxobutanoate + H2O. The catalysed reaction is (2R,3R)-2,3-dihydroxy-3-methylpentanoate = (S)-3-methyl-2-oxopentanoate + H2O. It participates in amino-acid biosynthesis; L-isoleucine biosynthesis; L-isoleucine from 2-oxobutanoate: step 3/4. Its pathway is amino-acid biosynthesis; L-valine biosynthesis; L-valine from pyruvate: step 3/4. Functionally, functions in the biosynthesis of branched-chain amino acids. Catalyzes the dehydration of (2R,3R)-2,3-dihydroxy-3-methylpentanoate (2,3-dihydroxy-3-methylvalerate) into 2-oxo-3-methylpentanoate (2-oxo-3-methylvalerate) and of (2R)-2,3-dihydroxy-3-methylbutanoate (2,3-dihydroxyisovalerate) into 2-oxo-3-methylbutanoate (2-oxoisovalerate), the penultimate precursor to L-isoleucine and L-valine, respectively. The chain is Dihydroxy-acid dehydratase from Sodalis glossinidius (strain morsitans).